A 450-amino-acid polypeptide reads, in one-letter code: Glutamyl-tRNA(Gln) amidotransferase subunit A, mitochondrial (450 aa).

Catalysis depends on charge relay system residues Lys-47 and Ser-122. Ser-146 functions as the Acyl-ester intermediate in the catalytic mechanism.

Belongs to the amidase family. GatA subfamily. As to quaternary structure, subunit of the heterotrimeric GatFAB amidotransferase (AdT) complex, composed of A, B and F subunits.

It is found in the mitochondrion. The enzyme catalyses L-glutamyl-tRNA(Gln) + L-glutamine + ATP + H2O = L-glutaminyl-tRNA(Gln) + L-glutamate + ADP + phosphate + H(+). Its function is as follows. Allows the formation of correctly charged Gln-tRNA(Gln) through the transamidation of misacylated Glu-tRNA(Gln) in the mitochondria. The reaction takes place in the presence of glutamine and ATP through an activated gamma-phospho-Glu-tRNA(Gln). The protein is Glutamyl-tRNA(Gln) amidotransferase subunit A, mitochondrial of Candida albicans (strain WO-1) (Yeast).